Reading from the N-terminus, the 564-residue chain is Major facilitator superfamily transporter MPN_076 (564 aa).

Transmembrane regions (helical) follow at residues 1-21 (MLWA…FVID), 65-85 (ITLL…KFGY), 89-109 (VMIM…GDPL), 176-196 (IAGY…GTTL), 220-240 (NLWG…FQSV), 249-269 (VFIL…FAWF), 306-326 (MIGM…GGWW), 358-378 (AGLP…YMVF), 404-424 (IVIV…FAFV), 425-445 (AIAT…ILIL), 457-477 (VSVL…AFDI), and 501-521 (GAIA…AIVV).

It belongs to the major facilitator superfamily.

Its subcellular location is the cell membrane. This chain is Major facilitator superfamily transporter MPN_076, found in Mycoplasma pneumoniae (strain ATCC 29342 / M129 / Subtype 1) (Mycoplasmoides pneumoniae).